Consider the following 117-residue polypeptide: UPF0102 protein Swoo_0351 (117 aa).

The protein belongs to the UPF0102 family.

The protein is UPF0102 protein Swoo_0351 of Shewanella woodyi (strain ATCC 51908 / MS32).